We begin with the raw amino-acid sequence, 428 residues long: Hercynine oxygenase (428 aa).

His46 lines the Fe cation pocket. Gamma-L-glutamyl-L-cysteine is bound at residue Arg82–Arg85. 2 residues coordinate Fe cation: His129 and His133. Gamma-L-glutamyl-L-cysteine contacts are provided by Asp411 and Arg415.

This sequence belongs to the EgtB family. In terms of assembly, monomer. Fe(2+) is required as a cofactor.

The enzyme catalyses gamma-L-glutamyl-L-cysteine + hercynine + O2 = gamma-L-glutamyl-hercynylcysteine S-oxide + H2O. It functions in the pathway amino-acid biosynthesis; ergothioneine biosynthesis. In terms of biological role, catalyzes the oxidative sulfurization of hercynine (N-alpha,N-alpha,N-alpha-trimethyl-L-histidine) into hercynyl-gamma-L-glutamyl-L-cysteine sulfoxide, a step in the biosynthesis pathway of ergothioneine. Cannot use the alternative thiols cysteine, N-acetylcysteine, or glutathione instead of gamma-glutamylcysteine as substrates, and histidine is a poor sulfur acceptor substrate compared to hercynine. The protein is Hercynine oxygenase of Mycolicibacterium smegmatis (strain ATCC 700084 / mc(2)155) (Mycobacterium smegmatis).